A 420-amino-acid chain; its full sequence is Putative polyketide beta-ketoacyl synthase 1 (420 aa).

The Ketosynthase family 3 (KS3) domain maps to 3-414; the sequence is QRRVAITGIE…GFQSAMVLTS (412 aa). Catalysis depends on for beta-ketoacyl synthase activity residues cysteine 169, histidine 307, and histidine 344.

The protein belongs to the thiolase-like superfamily. Beta-ketoacyl-ACP synthases family.

It functions in the pathway antifungal biosynthesis; monensin biosynthesis. The sequence is that of Putative polyketide beta-ketoacyl synthase 1 from Streptomyces virginiae (Streptomyces cinnamonensis).